The primary structure comprises 734 residues: Ribosomal RNA large subunit methyltransferase K/L (734 aa).

A THUMP domain is found at His49–Leu167.

The protein belongs to the methyltransferase superfamily. RlmKL family.

The protein localises to the cytoplasm. It catalyses the reaction guanosine(2445) in 23S rRNA + S-adenosyl-L-methionine = N(2)-methylguanosine(2445) in 23S rRNA + S-adenosyl-L-homocysteine + H(+). The enzyme catalyses guanosine(2069) in 23S rRNA + S-adenosyl-L-methionine = N(2)-methylguanosine(2069) in 23S rRNA + S-adenosyl-L-homocysteine + H(+). In terms of biological role, specifically methylates the guanine in position 2445 (m2G2445) and the guanine in position 2069 (m7G2069) of 23S rRNA. This chain is Ribosomal RNA large subunit methyltransferase K/L, found in Acinetobacter baumannii (strain ACICU).